The primary structure comprises 424 residues: Glutamate-1-semialdehyde 2,1-aminomutase (424 aa).

An N6-(pyridoxal phosphate)lysine modification is found at Lys263.

This sequence belongs to the class-III pyridoxal-phosphate-dependent aminotransferase family. HemL subfamily. In terms of assembly, homodimer. Requires pyridoxal 5'-phosphate as cofactor.

The protein localises to the cytoplasm. The catalysed reaction is (S)-4-amino-5-oxopentanoate = 5-aminolevulinate. The protein operates within porphyrin-containing compound metabolism; protoporphyrin-IX biosynthesis; 5-aminolevulinate from L-glutamyl-tRNA(Glu): step 2/2. The protein is Glutamate-1-semialdehyde 2,1-aminomutase of Campylobacter jejuni subsp. jejuni serotype O:23/36 (strain 81-176).